Reading from the N-terminus, the 317-residue chain is Zinc finger protein 771 (317 aa).

Residues 1–17 (MPGEQQAEEEEEEEMQE) show a composition bias toward acidic residues. The disordered stretch occupies residues 1–63 (MPGEQQAEEE…APSADPARPH (63 aa)). Residue Lys33 forms a Glycyl lysine isopeptide (Lys-Gly) (interchain with G-Cter in SUMO2) linkage. Residues 33–49 (KYEVVKLKIPMDNKEVP) show a composition bias toward basic and acidic residues. 8 consecutive C2H2-type zinc fingers follow at residues 63–85 (HACP…ARTH), 91–113 (FGCT…GRTH), 119–141 (YECP…RRRH), 147–169 (YACA…LRVH), 175–197 (YACP…RRTH), 203–225 (YACA…RRVH), 231–253 (HRCA…ARTH), and 259–281 (YPCA…RRAH).

Belongs to the krueppel C2H2-type zinc-finger protein family.

It is found in the nucleus. May be involved in transcriptional regulation. This is Zinc finger protein 771 (ZNF771) from Homo sapiens (Human).